Here is a 334-residue protein sequence, read N- to C-terminus: WD repeat-containing protein 54 (334 aa).

WD repeat units lie at residues 116-155 (SSVQ…PNIV), 162-206 (GHQT…TLLT), and 250-289 (AHAR…ESGS).

As to quaternary structure, homodimer and homotrimer; forms tight forms of dimers and trimers. Interacts with IZUMO1 and IZUMO1R/JUNO. Post-translationally, cross-linked to tightly form both dimers and trimers by TGM2. Cross-linking enhances the activation of EGF receptor-mediated signaling pathway. Cross-linking is inhibited by EGF. Ubiquitinated. EGF increases ubiquitination.

It localises to the vesicle. Its subcellular location is the cytoplasm. It is found in the cell membrane. In terms of biological role, plays a role in the adhesion and fusion of the sperm-oocyte membrane through its interactions with IZUMO1 and IZUMO1R/JUNO. When cross-linked to form dimers and trimers, it has a regulatory effect on ERK signaling pathway activity in response to EGF stimulation. Colocalizes with the EGF receptor in WDR54-specific vesicle where it sustains the internalization and controls the degradation of the EGF receptor after EGF stimulation. This chain is WD repeat-containing protein 54, found in Mus musculus (Mouse).